Here is a 182-residue protein sequence, read N- to C-terminus: Lipid A acyltransferase PagP (182 aa).

An N-terminal signal peptide occupies residues Met1–Ala21. Cys22 is lipidated: N-palmitoyl cysteine. Residue Cys22 is the site of S-diacylglycerol cysteine attachment. Active-site residues include His55, Asp98, and Ser99.

It belongs to the lipid A palmitoyltransferase family. In terms of assembly, homodimer.

It localises to the cell outer membrane. It catalyses the reaction a lipid A + a 1,2-diacyl-sn-glycero-3-phosphocholine = a hepta-acyl lipid A + a 2-acyl-sn-glycero-3-phosphocholine. The enzyme catalyses a lipid IVA + a 1,2-diacyl-sn-glycero-3-phosphocholine = a lipid IVB + a 2-acyl-sn-glycero-3-phosphocholine. It carries out the reaction a lipid IIA + a 1,2-diacyl-sn-glycero-3-phosphocholine = a lipid IIB + a 2-acyl-sn-glycero-3-phosphocholine. Functionally, transfers a fatty acid residue from the sn-1 position of a phospholipid to the N-linked hydroxyfatty acid chain on the proximal unit of lipid A or its precursors. Required for resistance to cationic antimicrobial peptides (CAMPs). Modifications of lipid A with an acyl chain to evade host immune defenses by resisting antibody-mediated complement lysis during respiratory infection. The polypeptide is Lipid A acyltransferase PagP (Bordetella bronchiseptica (strain ATCC BAA-588 / NCTC 13252 / RB50) (Alcaligenes bronchisepticus)).